Here is a 272-residue protein sequence, read N- to C-terminus: Phosphonates import ATP-binding protein PhnC (272 aa).

The region spanning 2–246 (LELQRLTKTY…VLATIYGAED (245 aa)) is the ABC transporter domain. 35–42 (GPSGAGKS) contributes to the ATP binding site. The tract at residues 248-272 (ASSGREPAPEREPEDTERHLAEVGR) is disordered. A compositionally biased stretch (basic and acidic residues) spans 254–272 (PAPEREPEDTERHLAEVGR).

It belongs to the ABC transporter superfamily. Phosphonates importer (TC 3.A.1.9.1) family. The complex is composed of two ATP-binding proteins (PhnC), two transmembrane proteins (PhnE) and a solute-binding protein (PhnD).

The protein localises to the cell inner membrane. It carries out the reaction phosphonate(out) + ATP + H2O = phosphonate(in) + ADP + phosphate + H(+). Functionally, part of the ABC transporter complex PhnCDE involved in phosphonates import. Responsible for energy coupling to the transport system. The protein is Phosphonates import ATP-binding protein PhnC of Chromohalobacter salexigens (strain ATCC BAA-138 / DSM 3043 / CIP 106854 / NCIMB 13768 / 1H11).